A 280-amino-acid chain; its full sequence is Energy-coupling factor transporter ATP-binding protein EcfA2 (280 aa).

Residues 3-245 (INLQNVSYTY…VSLLEKKQLG (243 aa)) enclose the ABC transporter domain. 40 to 47 (GHTGSGKS) lines the ATP pocket.

The protein belongs to the ABC transporter superfamily. Energy-coupling factor EcfA family. As to quaternary structure, forms a stable energy-coupling factor (ECF) transporter complex composed of 2 membrane-embedded substrate-binding proteins (S component), 2 ATP-binding proteins (A component) and 2 transmembrane proteins (T component).

The protein localises to the cell membrane. Functionally, ATP-binding (A) component of a common energy-coupling factor (ECF) ABC-transporter complex. Unlike classic ABC transporters this ECF transporter provides the energy necessary to transport a number of different substrates. This is Energy-coupling factor transporter ATP-binding protein EcfA2 from Streptococcus pyogenes serotype M3 (strain ATCC BAA-595 / MGAS315).